We begin with the raw amino-acid sequence, 183 residues long: Peptide deformylase (183 aa).

Fe cation contacts are provided by Cys90 and His132. The active site involves Glu133. Position 136 (His136) interacts with Fe cation.

The protein belongs to the polypeptide deformylase family. Requires Fe(2+) as cofactor.

The enzyme catalyses N-terminal N-formyl-L-methionyl-[peptide] + H2O = N-terminal L-methionyl-[peptide] + formate. Its function is as follows. Removes the formyl group from the N-terminal Met of newly synthesized proteins. Requires at least a dipeptide for an efficient rate of reaction. N-terminal L-methionine is a prerequisite for activity but the enzyme has broad specificity at other positions. This chain is Peptide deformylase, found in Parafrankia sp. (strain EAN1pec).